A 425-amino-acid chain; its full sequence is Enolase (425 aa).

A (2R)-2-phosphoglycerate-binding site is contributed by Gln-163. Glu-205 serves as the catalytic Proton donor. Mg(2+) contacts are provided by Asp-242, Glu-285, and Asp-312. (2R)-2-phosphoglycerate is bound by residues Lys-337, Arg-366, Ser-367, and Lys-388. Residue Lys-337 is the Proton acceptor of the active site.

It belongs to the enolase family. Mg(2+) serves as cofactor.

The protein localises to the cytoplasm. The protein resides in the secreted. It is found in the cell surface. The enzyme catalyses (2R)-2-phosphoglycerate = phosphoenolpyruvate + H2O. It functions in the pathway carbohydrate degradation; glycolysis; pyruvate from D-glyceraldehyde 3-phosphate: step 4/5. In terms of biological role, catalyzes the reversible conversion of 2-phosphoglycerate (2-PG) into phosphoenolpyruvate (PEP). It is essential for the degradation of carbohydrates via glycolysis. In Syntrophomonas wolfei subsp. wolfei (strain DSM 2245B / Goettingen), this protein is Enolase.